The chain runs to 326 residues: DNA repair protein RAD51 homolog 4 (326 aa).

A preferentially binds ssDNA region spans residues 1–83; the sequence is MGVLRAGLCP…ELKTSTAILS (83 aa). Residue 107–114 participates in ATP binding; it reads GAPGSGKT.

It belongs to the RecA family. RAD51 subfamily. Part of the BCDX2 complex consisting of RAD51B, RAD51C, RAD51D and XRCC2; the complex has a ring-like structure arranged into a flat disc around a central channel. In the absence of DNA, the BCDX2 subcomplex XRCC2:RAD51D formed a multimeric ring structure; in the presence of single-stranded DNA it formed a filamentous structure with the ssDNA. Interacts with SWSAP1 and ZSWIM7; involved in homologous recombination repair. Interacts with BLM; required for stimulation of BLM activity by the BCDX2 subcomplex XRCC2:RAD51D.

The protein localises to the nucleus. Its function is as follows. Involved in the homologous recombination repair (HRR) pathway of double-stranded DNA breaks arising during DNA replication or induced by DNA-damaging agents. Bind to single-stranded DNA (ssDNA) and has DNA-dependent ATPase activity. Part of the RAD51 paralog protein complex BCDX2 which acts in the BRCA1-BRCA2-dependent HR pathway. Upon DNA damage, BCDX2 acts downstream of BRCA2 recruitment and upstream of RAD51 recruitment. BCDX2 binds predominantly to the intersection of the four duplex arms of the Holliday junction and to junction of replication forks. The BCDX2 complex was originally reported to bind single-stranded DNA, single-stranded gaps in duplex DNA and specifically to nicks in duplex DNA. Involved in telomere maintenance. The BCDX2 subcomplex XRCC2:RAD51D can stimulate Holliday junction resolution by BLM. This chain is DNA repair protein RAD51 homolog 4 (RAD51D), found in Bos taurus (Bovine).